The following is a 302-amino-acid chain: Methylsterol monooxygenase erg25A (302 aa).

N5 carries N-linked (GlcNAc...) asparagine glycosylation. 3 consecutive transmembrane segments (helical) span residues 47–67, 105–125, and 132–152; these read NIVA…IYFS, YILL…HPMM, and FTIP…FFLL. The region spanning 147–283 is the Fatty acid hydroxylase domain; that stretch reads IIFFLLEDTY…FRHWDVLMGT (137 aa). The short motif at 161–165 is the Histidine box-1 element; that stretch reads HRAMH. The Histidine box-2 signature appears at 174–178; that stretch reads HRIHH. A helical membrane pass occupies residues 193–213; that stretch reads PWETLLLGLGTIGPPLLLALM. The short motif at 258-264 is the Histidine box-3 element; the sequence is WHDDHHR. N-linked (GlcNAc...) asparagine glycosylation is present at N269.

It belongs to the sterol desaturase family. It depends on Fe cation as a cofactor.

It localises to the endoplasmic reticulum membrane. It participates in steroid metabolism; ergosterol biosynthesis. Its function is as follows. Sterol-C4-methyl oxidase; part of the third module of ergosterol biosynthesis pathway that includes the late steps of the pathway. Erg25A is a catalytic component of the C-4 demethylation complex that catalyzes the conversion of 4,4-dimethylfecosterol into fecosterol via 4-methylfecosterol. The third module or late pathway involves the ergosterol synthesis itself through consecutive reactions that mainly occur in the endoplasmic reticulum (ER) membrane. Firstly, the squalene synthase erg9 catalyzes the condensation of 2 farnesyl pyrophosphate moieties to form squalene, which is the precursor of all steroids. Squalene synthase is crucial for balancing the incorporation of farnesyl diphosphate (FPP) into sterol and nonsterol isoprene synthesis. Secondly, squalene is converted into lanosterol by the consecutive action of the squalene epoxidase erg1 and the lanosterol synthase erg7. Then, the delta(24)-sterol C-methyltransferase erg6 methylates lanosterol at C-24 to produce eburicol. Eburicol is the substrate of the sterol 14-alpha demethylase encoded by cyp51A and cyp51B, to yield 4,4,24-trimethyl ergosta-8,14,24(28)-trienol. The C-14 reductase erg24 then reduces the C14=C15 double bond which leads to 4,4-dimethylfecosterol. A sequence of further demethylations at C-4, involving the C-4 demethylation complex containing the C-4 methylsterol oxidases erg25A or erg25B, the sterol-4-alpha-carboxylate 3-dehydrogenase erg26 and the 3-keto-steroid reductase erg27, leads to the production of fecosterol via 4-methylfecosterol. The C-8 sterol isomerase erg2 then catalyzes the reaction which results in unsaturation at C-7 in the B ring of sterols and thus converts fecosterol to episterol. The sterol-C5-desaturase erg3B then catalyzes the introduction of a C-5 double bond in the B ring to produce 5-dehydroepisterol. The 2 other sterol-C5-desaturases, erg3A and erg3C, seem to be less important in ergosterol biosynthesis. The C-22 sterol desaturase erg5 further converts 5-dehydroepisterol into ergosta-5,7,22,24(28)-tetraen-3beta-ol by forming the C-22(23) double bond in the sterol side chain. Finally, ergosta-5,7,22,24(28)-tetraen-3beta-ol is substrate of the C-24(28) sterol reductases erg4A and erg4B to produce ergosterol. Possible alternative sterol biosynthetic pathways might exist from fecosterol to ergosterol, depending on the activities of the erg3 isoforms. The protein is Methylsterol monooxygenase erg25A of Aspergillus fumigatus (strain ATCC MYA-4609 / CBS 101355 / FGSC A1100 / Af293) (Neosartorya fumigata).